A 345-amino-acid chain; its full sequence is Dihydroorotate dehydrogenase (quinone) (345 aa).

FMN is bound by residues 65–69 (AGLDK) and threonine 89. A substrate-binding site is contributed by lysine 69. 114–118 (NRMGF) is a substrate binding site. Residues asparagine 142 and asparagine 175 each contribute to the FMN site. Asparagine 175 serves as a coordination point for substrate. Serine 178 (nucleophile) is an active-site residue. Asparagine 180 is a binding site for substrate. FMN is bound by residues lysine 220 and threonine 248. Position 249-250 (249-250 (NT)) interacts with substrate. Residues glycine 271, glycine 300, and 321–322 (YT) contribute to the FMN site.

Belongs to the dihydroorotate dehydrogenase family. Type 2 subfamily. Monomer. Requires FMN as cofactor.

It localises to the cell membrane. It carries out the reaction (S)-dihydroorotate + a quinone = orotate + a quinol. It participates in pyrimidine metabolism; UMP biosynthesis via de novo pathway; orotate from (S)-dihydroorotate (quinone route): step 1/1. Catalyzes the conversion of dihydroorotate to orotate with quinone as electron acceptor. The protein is Dihydroorotate dehydrogenase (quinone) of Burkholderia ambifaria (strain ATCC BAA-244 / DSM 16087 / CCUG 44356 / LMG 19182 / AMMD) (Burkholderia cepacia (strain AMMD)).